Reading from the N-terminus, the 776-residue chain is Ecdysone receptor (776 aa).

Residues 1–290 (MYRLNIVSTN…GPTPRQQEEL (290 aa)) form a modulating region. Residues 199-283 (NEEWISSPSP…DAKKQKKGPT (85 aa)) are disordered. A compositionally biased stretch (low complexity) spans 204–213 (SSPSPGSVPG). 2 stretches are compositionally biased toward polar residues: residues 227–245 (TTYTTTMSNGYSSPMSTGS) and 261–270 (SPSSSLNGYT). Residues 288–363 (EELCLVCGDR…VGMRPECVVP (76 aa)) constitute a DNA-binding region (nuclear receptor). NR C4-type zinc fingers lie at residues 291 to 311 (CLVCGDRESGYHYNALTCEGC) and 327 to 346 (CKFGHACEMDMYMRRKCQEC). Residues 437–673 (NQMAVIYKLI…FLEEIWDVQD (237 aa)) enclose the NR LBD domain. Residues 679–688 (QAQMHSHGTQ) show a composition bias toward polar residues. Residues 679 to 776 (QAQMHSHGTQ…VPGLGMLDQV (98 aa)) form a disordered region. Positions 689 to 745 (SSSSSSSSSSSSSNGSSNGNSSSNSNSSQHGPHPHPHGQQLTPNQQQHQQQHSQLQQ) are enriched in low complexity.

This sequence belongs to the nuclear hormone receptor family. NR1 subfamily. In terms of assembly, heterodimer of USP and ECR. Only the heterodimer is capable of high-affinity binding to ecdysone. A peak level expression is seen in the fat body of previtellogenic female mosquitos at one and two days after eclosion, levels fall three-fold at three days posteclosion.

It is found in the nucleus. Receptor for ecdysone. Binds to ecdysone response elements (ECRES). The sequence is that of Ecdysone receptor (EcR) from Aedes aegypti (Yellowfever mosquito).